The sequence spans 1118 residues: Phytochrome 1 (1118 aa).

Residues 1–10 are compositionally biased toward low complexity; the sequence is MSSTRHSYSS. The tract at residues 1 to 23 is disordered; that stretch reads MSSTRHSYSSGGSGKSKHGRRIA. The region spanning 212-391 is the GAF domain; sequence DIGLLCDSVV…VFSLQLNMEV (180 aa). C317 serves as a coordination point for phytochromobilin. 2 PAS domains span residues 606 to 677 and 740 to 811; these read VASE…LEGE and DYKA…TKLM. Residues 887–1110 enclose the Histidine kinase domain; the sequence is YVKEELKKPL…LVTIQFPLAH (224 aa).

This sequence belongs to the phytochrome family. In terms of assembly, homodimer. Contains one covalently linked phytochromobilin chromophore.

In terms of biological role, regulatory photoreceptor which exists in two forms that are reversibly interconvertible by light: the Pr form that absorbs maximally in the red region of the spectrum and the Pfr form that absorbs maximally in the far-red region. Photoconversion of Pr to Pfr induces an array of morphogenic responses, whereas reconversion of Pfr to Pr cancels the induction of those responses. Pfr controls the expression of a number of nuclear genes including those encoding the small subunit of ribulose-bisphosphate carboxylase, chlorophyll A/B binding protein, protochlorophyllide reductase, rRNA, etc. It also controls the expression of its own gene(s) in a negative feedback fashion. The polypeptide is Phytochrome 1 (PHY1) (Adiantum capillus-veneris (Maidenhair fern)).